The chain runs to 529 residues: MNNARPIRRALLSVSDKTGILEFAQALHAQGVELLSTGGTARLLADNGVPVIEVSDYTGHPEIMDGRVKTLHPKVHGGILARRGIDELVMEQNNINPIDLVAVNLYPFAETVAKEGCTLADAVENIDIGGPTMVRSTAKNHKDTTIIVNASDYGRVIAEMQANEGSTTLETRFDLAIAAFEHTAAYDGMIANYFGTKVPAHSKDECHEDSKFPRTYNTQLVKKQDLRYGENSHQTAAFYVDTNLDEASVATAVQLQGKALSYNNIADTDSALECVKEFDEPACVIVKHANPCGVAIGDNLLEAYNRAFQTDPTSAFGGIIAFNGELDAATAAAIVERQFVEVIIAPSVSQAARDVVAAKANVRLLECGQWASKTTSLDYKRVNGGLLLQDRDQGMVGIDDVKVVSKRQPTASEMKDLMFCWKVAKFVKSNAIVYAKNSMTIGVGAGQMSRVYSAKVAGIKAADEGLVVQDSVMASDAFFPFRDGIDAAAEAGISCIIQPGGSIRDEEIINAADEHGMAMVFTGMRHFRH.

In terms of domain architecture, MGS-like spans 1-148 (MNNARPIRRA…KNHKDTTIIV (148 aa)).

The protein belongs to the PurH family.

It carries out the reaction (6R)-10-formyltetrahydrofolate + 5-amino-1-(5-phospho-beta-D-ribosyl)imidazole-4-carboxamide = 5-formamido-1-(5-phospho-D-ribosyl)imidazole-4-carboxamide + (6S)-5,6,7,8-tetrahydrofolate. It catalyses the reaction IMP + H2O = 5-formamido-1-(5-phospho-D-ribosyl)imidazole-4-carboxamide. The protein operates within purine metabolism; IMP biosynthesis via de novo pathway; 5-formamido-1-(5-phospho-D-ribosyl)imidazole-4-carboxamide from 5-amino-1-(5-phospho-D-ribosyl)imidazole-4-carboxamide (10-formyl THF route): step 1/1. Its pathway is purine metabolism; IMP biosynthesis via de novo pathway; IMP from 5-formamido-1-(5-phospho-D-ribosyl)imidazole-4-carboxamide: step 1/1. In Shewanella piezotolerans (strain WP3 / JCM 13877), this protein is Bifunctional purine biosynthesis protein PurH.